The primary structure comprises 424 residues: UDP-N-acetylglucosamine 1-carboxyvinyltransferase (424 aa).

A phosphoenolpyruvate-binding site is contributed by 22–23 (KN). R95 contributes to the UDP-N-acetyl-alpha-D-glucosamine binding site. Catalysis depends on C119, which acts as the Proton donor. C119 bears the 2-(S-cysteinyl)pyruvic acid O-phosphothioketal mark. UDP-N-acetyl-alpha-D-glucosamine-binding positions include 124–128 (RPVDQ), D311, and I333.

Belongs to the EPSP synthase family. MurA subfamily.

The protein resides in the cytoplasm. It catalyses the reaction phosphoenolpyruvate + UDP-N-acetyl-alpha-D-glucosamine = UDP-N-acetyl-3-O-(1-carboxyvinyl)-alpha-D-glucosamine + phosphate. It functions in the pathway cell wall biogenesis; peptidoglycan biosynthesis. Cell wall formation. Adds enolpyruvyl to UDP-N-acetylglucosamine. In Polaromonas sp. (strain JS666 / ATCC BAA-500), this protein is UDP-N-acetylglucosamine 1-carboxyvinyltransferase.